The chain runs to 239 residues: Ribonuclease 3 (239 aa).

The 124-residue stretch at 18–141 folds into the RNase III domain; that stretch reads YTTLEKALGY…LMAGVYLEAG (124 aa). E54 is a Mg(2+) binding site. D58 is a catalytic residue. Mg(2+) is bound by residues S127 and E130. E130 is an active-site residue. A DRBM domain is found at 168-237; the sequence is DYKTALQELT…AYYALQKLKE (70 aa).

The protein belongs to the ribonuclease III family. Homodimer. Mg(2+) serves as cofactor.

It localises to the cytoplasm. It catalyses the reaction Endonucleolytic cleavage to 5'-phosphomonoester.. Its function is as follows. Digests double-stranded RNA. Involved in the processing of primary rRNA transcript to yield the immediate precursors to the large and small rRNAs (23S and 16S). Processes some mRNAs, and tRNAs when they are encoded in the rRNA operon. Processes pre-crRNA and tracrRNA of type II CRISPR loci if present in the organism. The chain is Ribonuclease 3 from Helicobacter pylori (strain G27).